Here is a 258-residue protein sequence, read N- to C-terminus: Glutamate racemase (258 aa).

Residues 11–12 (DS) and 43–44 (YG) contribute to the substrate site. C74 serves as the catalytic Proton donor/acceptor. 75–76 (NT) lines the substrate pocket. Residue C187 is the Proton donor/acceptor of the active site. 188–189 (TH) is a binding site for substrate.

The protein belongs to the aspartate/glutamate racemases family.

The catalysed reaction is L-glutamate = D-glutamate. It functions in the pathway cell wall biogenesis; peptidoglycan biosynthesis. Provides the (R)-glutamate required for cell wall biosynthesis. The chain is Glutamate racemase from Bifidobacterium animalis subsp. lactis (strain AD011).